Reading from the N-terminus, the 369-residue chain is Uroporphyrinogen decarboxylase (369 aa).

Substrate contacts are provided by residues 28–32 (RQAGR), D78, Y154, S209, and H339.

This sequence belongs to the uroporphyrinogen decarboxylase family. Homodimer.

The protein localises to the cytoplasm. The catalysed reaction is uroporphyrinogen III + 4 H(+) = coproporphyrinogen III + 4 CO2. The protein operates within porphyrin-containing compound metabolism; protoporphyrin-IX biosynthesis; coproporphyrinogen-III from 5-aminolevulinate: step 4/4. In terms of biological role, catalyzes the decarboxylation of four acetate groups of uroporphyrinogen-III to yield coproporphyrinogen-III. The chain is Uroporphyrinogen decarboxylase from Polaromonas naphthalenivorans (strain CJ2).